The primary structure comprises 62 residues: Ranacyclin-T (62 aa).

The first 22 residues, 1–22 (MFTMKKTLLVLFFLGVVSLSLC), serve as a signal peptide directing secretion. Positions 23 to 43 (VEERDADEEDGGEVMEEEVKR) are excised as a propeptide. An intrachain disulfide couples Cys-49 to Cys-59. Lys-60 bears the Lysine amide mark.

This sequence belongs to the frog skin active peptide (FSAP) family. Brevinin subfamily. Expressed by the skin granular glands.

The protein localises to the secreted. Its function is as follows. Has antibacterial activity against Gram-positive bacteria B.megaterium Bm11, S.lentus and M.luteus, and Gram-negative bacteria E.coli D22, Y.pseudotuberculosis YP III and P.syringae pv tabaci, and antifungal activity against C.albicans ATCC 10231, C.tropicalis, C.guiller-mondii and P.nicotianae spores. Has weak hemolytic activity. The mature peptide inserts into the hydrophobic core of the bacterial cell membrane and increases permeability without disrupting membrane integrity. Probably binds to the outer membrane surface before aggregating to form transmembrane pores. In Rana temporaria (European common frog), this protein is Ranacyclin-T (RNCT).